We begin with the raw amino-acid sequence, 687 residues long: Glycine--tRNA ligase beta subunit (687 aa).

Belongs to the class-II aminoacyl-tRNA synthetase family. Tetramer of two alpha and two beta subunits.

It is found in the cytoplasm. It catalyses the reaction tRNA(Gly) + glycine + ATP = glycyl-tRNA(Gly) + AMP + diphosphate. This Citrifermentans bemidjiense (strain ATCC BAA-1014 / DSM 16622 / JCM 12645 / Bem) (Geobacter bemidjiensis) protein is Glycine--tRNA ligase beta subunit.